Consider the following 217-residue polypeptide: Small ribosomal subunit protein uS3 (217 aa).

In terms of domain architecture, KH type-2 spans 24–93 (IKEFLEYKLS…NPQIDVIDVS (70 aa)).

It belongs to the universal ribosomal protein uS3 family. Part of the 30S ribosomal subunit.

Its function is as follows. Binds the lower part of the 30S subunit head. This chain is Small ribosomal subunit protein uS3, found in Pyrobaculum islandicum (strain DSM 4184 / JCM 9189 / GEO3).